The primary structure comprises 631 residues: Mitochondrial Rho GTPase 1 (631 aa).

Over 1–605 the chain is Cytoplasmic; the sequence is MPAGRGRPLR…TQADLKSSTF (605 aa). Residues 15-181 form the Miro 1 domain; sequence KKDVRILLVG…FYYAQKAVLH (167 aa). GTP is bound by residues Arg27, Gly29, Lys30, Thr31, and Ser32. A Mg(2+)-binding site is contributed by Thr31. Residues Pro48 and Asp70 each contribute to the Mg(2+) site. Ser72 provides a ligand contact to GTP. The residue at position 105 (Lys105) is an N6-acetyllysine. GTP is bound by residues Asn131, Lys132, Asp134, Ala162, and Lys163. Lys166 participates in a covalent cross-link: Glycyl lysine isopeptide (Lys-Gly) (interchain with G-Cter in ubiquitin). The EF-hand 1 domain maps to 197–232; it reads ACIKALTRIFKISDQDNDGTLNDAELNFFQRICFNT. The Ca(2+) site is built by Asp210, Asp212, Asp214, Thr216, and Glu221. Lys248 participates in a covalent cross-link: Glycyl lysine isopeptide (Lys-Gly) (interchain with G-Cter in ubiquitin). The region spanning 317-352 is the EF-hand 2 domain; sequence HAYLFLQSTFDKHDLDRDCALSPDELKDLFKVFPYI. Residues Asp330, Asp332, Asp334, Ala336, and Glu341 each contribute to the Ca(2+) site. One can recognise a Miro 2 domain in the interval 429-592; it reads RNVFRCNVIG…FVKLTTMAMY (164 aa). 11 residues coordinate GTP: Asn441, Cys442, Gly443, Lys444, Ser445, Gly446, Lys460, Lys541, Asp543, Thr571, and Cys572. Asn441 lines the Mg(2+) pocket. A Glycyl lysine isopeptide (Lys-Gly) (interchain with G-Cter in ubiquitin) cross-link involves residue Lys585. The chain crosses the membrane as a helical; Anchor for type IV membrane protein span at residues 606-628; sequence WLRASFGATVFAVLGFAMYKALL. At 629 to 631 the chain is on the mitochondrial intermembrane side; sequence KQR.

The protein belongs to the mitochondrial Rho GTPase family. Homodimer. Interacts with the kinesin-binding proteins TRAK1/OIP106 and TRAK2/GRIF1, forming a link between mitochondria and the trafficking apparatus of the microtubules. Interacts with RAP1GDS1. Interacts with ARMCX1. Found in a complex with KIF5B, OGT, RHOT2 and TRAK1. In terms of processing, ubiquitinated by PRKN during mitophagy, leading to its degradation and enhancement of mitophagy. Deubiquitinated by USP30. Acetylation on Lys-105 decreases sensitivity of mitochondrial transport to elevated Ca(2+) levels, increases mitochondrial transport and promotes axon growth. Deacetylated by HDAC6 which blocks mitochondrial transport and mediates axon growth inhibition.

It is found in the mitochondrion outer membrane. The enzyme catalyses GTP + H2O = GDP + phosphate + H(+). The catalysed reaction is ATP + H2O = ADP + phosphate + H(+). It carries out the reaction UTP + H2O = UDP + phosphate + H(+). In terms of biological role, atypical mitochondrial nucleoside-triphosphatase (NTPase) involved in mitochondrial trafficking. Probably involved in control of anterograde transport of mitochondria and their subcellular distribution. Promotes mitochondrial fission during high calcium conditions. Can hydrolyze GTP, ATP and UTP. This chain is Mitochondrial Rho GTPase 1 (RHOT1), found in Bos taurus (Bovine).